Consider the following 363-residue polypeptide: Heat-inducible transcription repressor HrcA (363 aa).

The protein belongs to the HrcA family.

Functionally, negative regulator of class I heat shock genes (grpE-dnaK-dnaJ and groELS operons). Prevents heat-shock induction of these operons. This chain is Heat-inducible transcription repressor HrcA, found in Afipia carboxidovorans (strain ATCC 49405 / DSM 1227 / KCTC 32145 / OM5) (Oligotropha carboxidovorans).